We begin with the raw amino-acid sequence, 694 residues long: Elongation factor G (694 aa).

Positions 6-288 (KLYRNIGIAA…GVIEYLPSPT (283 aa)) constitute a tr-type G domain. GTP contacts are provided by residues 15 to 22 (AHVDAGKT), 86 to 90 (DTPGH), and 140 to 143 (NKMD).

This sequence belongs to the TRAFAC class translation factor GTPase superfamily. Classic translation factor GTPase family. EF-G/EF-2 subfamily.

It is found in the cytoplasm. Catalyzes the GTP-dependent ribosomal translocation step during translation elongation. During this step, the ribosome changes from the pre-translocational (PRE) to the post-translocational (POST) state as the newly formed A-site-bound peptidyl-tRNA and P-site-bound deacylated tRNA move to the P and E sites, respectively. Catalyzes the coordinated movement of the two tRNA molecules, the mRNA and conformational changes in the ribosome. The polypeptide is Elongation factor G (Legionella pneumophila (strain Corby)).